A 486-amino-acid chain; its full sequence is Glycogen synthase (486 aa).

Lys15 lines the ADP-alpha-D-glucose pocket.

It belongs to the glycosyltransferase 1 family. Bacterial/plant glycogen synthase subfamily.

It carries out the reaction [(1-&gt;4)-alpha-D-glucosyl](n) + ADP-alpha-D-glucose = [(1-&gt;4)-alpha-D-glucosyl](n+1) + ADP + H(+). The protein operates within glycan biosynthesis; glycogen biosynthesis. In terms of biological role, synthesizes alpha-1,4-glucan chains using ADP-glucose. The polypeptide is Glycogen synthase (Thermotoga petrophila (strain ATCC BAA-488 / DSM 13995 / JCM 10881 / RKU-1)).